A 90-amino-acid polypeptide reads, in one-letter code: DNA-binding protein HU (90 aa).

This sequence belongs to the bacterial histone-like protein family. Homodimer.

Its function is as follows. Histone-like DNA-binding protein which is capable of wrapping DNA to stabilize it, and thus to prevent its denaturation under extreme environmental conditions. In Staphylococcus aureus (strain COL), this protein is DNA-binding protein HU (hup).